A 107-amino-acid chain; its full sequence is Thiosulfate sulfurtransferase GlpE (107 aa).

Positions 17–105 constitute a Rhodanese domain; sequence RQGEAVLVDI…WLKAFPLETE (89 aa). The active-site Cysteine persulfide intermediate is the cysteine 65.

This sequence belongs to the GlpE family.

Its subcellular location is the cytoplasm. It carries out the reaction thiosulfate + hydrogen cyanide = thiocyanate + sulfite + 2 H(+). The catalysed reaction is thiosulfate + [thioredoxin]-dithiol = [thioredoxin]-disulfide + hydrogen sulfide + sulfite + 2 H(+). Its function is as follows. Transferase that catalyzes the transfer of sulfur from thiosulfate to thiophilic acceptors such as cyanide or dithiols. May function in a CysM-independent thiosulfate assimilation pathway by catalyzing the conversion of thiosulfate to sulfite, which can then be used for L-cysteine biosynthesis. This is Thiosulfate sulfurtransferase GlpE from Sodalis glossinidius (strain morsitans).